We begin with the raw amino-acid sequence, 697 residues long: MQRETISVPVGAQEIIFETGKIARQAGGAVVVRCGETVVFTTACAAPNADSTTDFLPLRVDYQEKFSSAGKTLGGFIKREGRPTEKEVLVSRLIDRPIRPMFEEGYYNEVQLLSFVWSYDGINSPEPLAICGASAALVISDIPLIKPVGAVRIGFIDAQFIVNPTIEQQKQSKLDLLIAGTEEAVLMIEGFCDFLTEDQVLEAIEIGHRSIKTICQTLEQWRAKVGKPKNRETLRQLPKELYADVESIANPLLEKALRICEKQKREEALAEVTKAVNDRLMPENEEPKYPAKHIAYVIKDVSSKMMRQMILNENVRSDGRTSTDIRFIDIEQSLLPRAHGSSLFTRGETQALAVCTLGGASMAQRFEDLEGEGNNRFYLQYSFPPYSVGEVGRVGAPGRREIGHGKLAERALMAVIPTKEQFPYTIRLESNITESNGSSSMATVCGGCLALMDAGVAIKRPVAGIAMGLILENERFIILSDILGIEDALGDMDFKVTGDQNGITAFQMDIKVEGITIEIMRVALKQAKEGRVHILNKMLAVCPTYKGEMSRYAPRIETIQIKPSKIAVVIGPGGKQIRAIIEQTGVQIDIDDTGLVNIAAIDLVSIEKAKAIIHGLTAEIEIGRIYSGKAISIAPFGVFVEILPGKEGLCHISEFDVNRINSLDEFVKQGDMLMVKVLDINERGQIKLSRKATLQSQ.

Residues aspartate 487 and aspartate 493 each coordinate Mg(2+). The KH domain occupies 554–613 (PRIETIQIKPSKIAVVIGPGGKQIRAIIEQTGVQIDIDDTGLVNIAAIDLVSIEKAKAII). In terms of domain architecture, S1 motif spans 623-691 (GRIYSGKAIS…ERGQIKLSRK (69 aa)).

The protein belongs to the polyribonucleotide nucleotidyltransferase family. The cofactor is Mg(2+).

Its subcellular location is the cytoplasm. It catalyses the reaction RNA(n+1) + phosphate = RNA(n) + a ribonucleoside 5'-diphosphate. Functionally, involved in mRNA degradation. Catalyzes the phosphorolysis of single-stranded polyribonucleotides processively in the 3'- to 5'-direction. In Protochlamydia amoebophila (strain UWE25), this protein is Polyribonucleotide nucleotidyltransferase.